The following is a 496-amino-acid chain: ATP-dependent protease ATPase subunit HslU2 (496 aa).

The N-terminal 10 residues, Met-1–Cys-10, are a transit peptide targeting the mitochondrion. Residues Val-51 and Gly-94 to Glu-99 each bind ATP. Positions Gly-177–Ser-191 are enriched in low complexity. Residues Gly-177–Asn-204 form a disordered region. Residues Asp-308, Glu-374, and Arg-446 each coordinate ATP.

This sequence belongs to the ClpX chaperone family. HslU subfamily. A double ring-shaped homohexamer of HslV is capped on each side by a ring-shaped HslU homohexamer. The assembly of the HslU/HslV complex (HslVU) is dependent on binding of ATP.

It is found in the mitochondrion matrix. It localises to the kinetoplast. ATPase subunit of a proteasome-like degradation complex; this subunit has chaperone activity. The binding of ATP and its subsequent hydrolysis by HslU are essential for unfolding of protein substrates subsequently hydrolyzed by HslV. HslU recognizes the N-terminal part of its protein substrates and unfolds these before they are guided to HslV for hydrolysis. The HslVU protease complex functions in mitochondrial DNA replication by regulating DNA helicase PIF2 protein levels. This is ATP-dependent protease ATPase subunit HslU2 (HslU2) from Trypanosoma brucei brucei (strain 927/4 GUTat10.1).